We begin with the raw amino-acid sequence, 693 residues long: MMGPEDAGACSGRNAELLPVPGPMGQDGKTVPATGGFSGGAVAAEPPGEAGEEEAPPPRQLLQRYLAAAAGPLQPGLGGVEAEAAAVPAARGSGMTNGDSGFLLLQDRRGPEEARRRRTCGRPCLAEPADEGVDGAGGLDDWAAPLEDPLRSCCLAAGDTDDPDPTATTSAGRDVGSAESSLGLPDARFGSRNTFEVSRRQSAGDLLPSAGQSAPLPAAEQGPGGTTVRARRSGGFADFFARNLFPKRTKELKSVVHSAPGWKLFGKVPPRENLQKTSKIIQQEYEARTGRTCKVPPQSSRRKNFEFEPLSTTALILEDRPSNLPAKSVEEALRHRQEYDEMVAEAKKREIKEAHKRKRIMKERFKQEESIASAMVIWINEILPNWEVMRSTRRVRELWWQGLPPSVRGKVWSLAVGNELNITPELYEIFLSRAKERWKSFSESSSDSDMEGLSVADREASLELIKLDISRTFPSLYIFQKGGPYHDVLHSILGAYTCYRPDVGYVQGMSFIAAVLILNLEEADAFIAFANLLNRPCQLAFFRVDHSMMLKYFATFEVFFEENLSKLFLHFKSYNLTPDIYLIDWIFTLYSKSLPLDLACRVWDVFCRDGEEFLFRTGLGILRLYEDILLQMDFIHIAQFLTKLPEDITSEKLFSCIAAIQMQNSTKKWTQVFASVTKDIKEGDKNNSPALKS.

Methionine 1 is modified (N-acetylmethionine). Disordered regions lie at residues 1-57 (MMGP…EAPP), 91-120 (RGSG…RRTC), and 156-229 (AAGD…TTVR). The segment covering 40–49 (GAVAAEPPGE) has biased composition (low complexity). Residues 106–115 (QDRRGPEEAR) show a composition bias toward basic and acidic residues. Serine 202 and serine 233 each carry phosphoserine. The Rab-GAP TBC domain occupies 402–610 (GLPPSVRGKV…RVWDVFCRDG (209 aa)).

In terms of assembly, interacts with RAB11A; this interaction recruits TBC1D12 to RAB11A-positive recycling endosomes.

The protein localises to the endosome. Functionally, RAB11A-binding protein that plays a role in neurite outgrowth. This is TBC1 domain family member 12 (Tbc1d12) from Rattus norvegicus (Rat).